The primary structure comprises 514 residues: MTFLIDKMYNILPPELWIKIVDYSGEINLLLVDTNFFELFNLVDAKIDVIEYIVRNNLTDILKYIVVLKTLKHPIINKNFVPTKSLNKLLIDNCEKRRLDIIQYLINIGADINSKKNRAVRLASERGYLEIVKYLVSQGADVRANKDYAVVWASRNGHLEVVKYLVSLGANIKVDDNFAVRWASRNGYIDVVKYLTSQDANIRADNNYAVRLASENGHIDVVKYLVSLGADIRADNNYAIRHASRGGHIEVVEYLVSLGANVKSCNDCAVKFASKNGHLGVVKYLASQGADVRSENDYAFRMASENGHLEVVVYLVRQGVNVRADNNYAVRMASENGYLEIVKFLVSQGANIRSKNDYAIQKASKNGHLEVVEHLVNQGANFKSDYDCAIKLASENGHLEVVKYLVSQDADIRVNNDYAIRWASRNGHIEVVKYLVSQGADIRADNDYAVRMASENGHLEVVKYLVNLGANVKAQNNYAVGWASRNGHIGVVKYLVSQGADVRSGNNCAAIMGF.

ANK repeat units lie at residues 45-74 (AKIDVIEYIVRNNLTDILKYIVVLKTLKHP), 84-114 (KSLNKLLIDNCEKRRLDIIQYLINIGADINS), 115-144 (KKNRAVRLASERGYLEIVKYLVSQGADVRA), 146-174 (KDYAVVWASRNGHLEVVKYLVSLGANIKV), 176-204 (DNFAVRWASRNGYIDVVKYLTSQDANIRA), 205-234 (DNNYAVRLASENGHIDVVKYLVSLGADIRA), 236-264 (NNYAIRHASRGGHIEVVEYLVSLGANVKS), 266-294 (NDCAVKFASKNGHLGVVKYLASQGADVRS), 295-324 (ENDYAFRMASENGHLEVVVYLVRQGVNVRA), 325-354 (DNNYAVRMASENGYLEIVKFLVSQGANIRS), 356-384 (NDYAIQKASKNGHLEVVEHLVNQGANFKS), 385-414 (DYDCAIKLASENGHLEVVKYLVSQDADIRV), 415-444 (NNDYAIRWASRNGHIEVVKYLVSQGADIRA), 446-474 (NDYAVRMASENGHLEVVKYLVNLGANVKA), and 476-504 (NNYAVGWASRNGHIGVVKYLVSQGADVRS).

The chain is Putative ankyrin repeat protein R863 from Acanthamoeba polyphaga mimivirus (APMV).